We begin with the raw amino-acid sequence, 197 residues long: Small ribosomal subunit protein uS4B (197 aa).

In terms of domain architecture, S4 RNA-binding spans 88-150 (SRLDNMVYRM…SRKTEMFVNN (63 aa)).

Belongs to the universal ribosomal protein uS4 family. As to quaternary structure, part of the 30S ribosomal subunit. Contacts protein S5. The interaction surface between S4 and S5 is involved in control of translational fidelity.

One of the primary rRNA binding proteins, it binds directly to 16S rRNA where it nucleates assembly of the body of the 30S subunit. Functionally, with S5 and S12 plays an important role in translational accuracy. This Clostridium perfringens (strain ATCC 13124 / DSM 756 / JCM 1290 / NCIMB 6125 / NCTC 8237 / Type A) protein is Small ribosomal subunit protein uS4B.